We begin with the raw amino-acid sequence, 346 residues long: MTEQRTIASSATREDEAADASIRPKRLADYLGQQPVRDQMEIYIQAAKARGEAMDHVLIFGPPGLGKTTLSHVIANELGVSLRVTSGPVIEKAGDLAALLTNLQPHDVLFIDEIHRLSPVVEEVLYPAMEDFQIDIMIGDGPAARSIKIDLPPFTLIGATTRAGLLTAPLRDRFGIVQRLEFYSPQELTRIVIRSAAILGIDCTPDGAAEIARRARGTPRIANRLLRRVRDFAQVKAAGHIDLTVAQAAMQMLKVDPEGFDELDRRMLRTIVDHFDGGPVGVESLAASLSEERGTLEDVIEPYLIQQGFLIRTARGRMVTPKAYLHLGLKPPRDSAPAIGEPGDLF.

A compositionally biased stretch (polar residues) spans 1–11 (MTEQRTIASSA). Residues 1 to 20 (MTEQRTIASSATREDEAADA) are disordered. Positions 1-183 (MTEQRTIASS…FGIVQRLEFY (183 aa)) are large ATPase domain (RuvB-L). Residues Ile22, Arg23, Gly64, Lys67, Thr68, Thr69, 130 to 132 (EDF), Arg173, Tyr183, and Arg220 contribute to the ATP site. Residue Thr68 coordinates Mg(2+). Residues 184–254 (SPQELTRIVI…VAQAAMQMLK (71 aa)) are small ATPAse domain (RuvB-S). Residues 257 to 346 (PEGFDELDRR…PAIGEPGDLF (90 aa)) are head domain (RuvB-H). DNA-binding residues include Arg293, Arg312, and Arg317.

Belongs to the RuvB family. As to quaternary structure, homohexamer. Forms an RuvA(8)-RuvB(12)-Holliday junction (HJ) complex. HJ DNA is sandwiched between 2 RuvA tetramers; dsDNA enters through RuvA and exits via RuvB. An RuvB hexamer assembles on each DNA strand where it exits the tetramer. Each RuvB hexamer is contacted by two RuvA subunits (via domain III) on 2 adjacent RuvB subunits; this complex drives branch migration. In the full resolvosome a probable DNA-RuvA(4)-RuvB(12)-RuvC(2) complex forms which resolves the HJ.

Its subcellular location is the cytoplasm. It carries out the reaction ATP + H2O = ADP + phosphate + H(+). Its function is as follows. The RuvA-RuvB-RuvC complex processes Holliday junction (HJ) DNA during genetic recombination and DNA repair, while the RuvA-RuvB complex plays an important role in the rescue of blocked DNA replication forks via replication fork reversal (RFR). RuvA specifically binds to HJ cruciform DNA, conferring on it an open structure. The RuvB hexamer acts as an ATP-dependent pump, pulling dsDNA into and through the RuvAB complex. RuvB forms 2 homohexamers on either side of HJ DNA bound by 1 or 2 RuvA tetramers; 4 subunits per hexamer contact DNA at a time. Coordinated motions by a converter formed by DNA-disengaged RuvB subunits stimulates ATP hydrolysis and nucleotide exchange. Immobilization of the converter enables RuvB to convert the ATP-contained energy into a lever motion, pulling 2 nucleotides of DNA out of the RuvA tetramer per ATP hydrolyzed, thus driving DNA branch migration. The RuvB motors rotate together with the DNA substrate, which together with the progressing nucleotide cycle form the mechanistic basis for DNA recombination by continuous HJ branch migration. Branch migration allows RuvC to scan DNA until it finds its consensus sequence, where it cleaves and resolves cruciform DNA. The chain is Holliday junction branch migration complex subunit RuvB from Xanthomonas campestris pv. campestris (strain ATCC 33913 / DSM 3586 / NCPPB 528 / LMG 568 / P 25).